The chain runs to 195 residues: Dephospho-CoA kinase (195 aa).

A DPCK domain is found at 4–195 (IIGLTGGIAS…EQILDALQRL (192 aa)). 12-17 (ASGKST) contacts ATP.

This sequence belongs to the CoaE family.

The protein localises to the cytoplasm. The enzyme catalyses 3'-dephospho-CoA + ATP = ADP + CoA + H(+). The protein operates within cofactor biosynthesis; coenzyme A biosynthesis; CoA from (R)-pantothenate: step 5/5. In terms of biological role, catalyzes the phosphorylation of the 3'-hydroxyl group of dephosphocoenzyme A to form coenzyme A. The polypeptide is Dephospho-CoA kinase (Streptococcus agalactiae serotype Ia (strain ATCC 27591 / A909 / CDC SS700)).